Reading from the N-terminus, the 253-residue chain is 1-(5-phosphoribosyl)-5-[(5-phosphoribosylamino)methylideneamino] imidazole-4-carboxamide isomerase (253 aa).

D8 serves as the catalytic Proton acceptor. The active-site Proton donor is the D129.

This sequence belongs to the HisA/HisF family.

The protein localises to the cytoplasm. It carries out the reaction 1-(5-phospho-beta-D-ribosyl)-5-[(5-phospho-beta-D-ribosylamino)methylideneamino]imidazole-4-carboxamide = 5-[(5-phospho-1-deoxy-D-ribulos-1-ylimino)methylamino]-1-(5-phospho-beta-D-ribosyl)imidazole-4-carboxamide. The protein operates within amino-acid biosynthesis; L-histidine biosynthesis; L-histidine from 5-phospho-alpha-D-ribose 1-diphosphate: step 4/9. The protein is 1-(5-phosphoribosyl)-5-[(5-phosphoribosylamino)methylideneamino] imidazole-4-carboxamide isomerase of Microcystis aeruginosa (strain NIES-843 / IAM M-2473).